A 282-amino-acid polypeptide reads, in one-letter code: Undecaprenyl-diphosphatase (282 aa).

Helical transmembrane passes span 1–21, 39–59, 85–105, 115–135, 153–173, 193–213, 229–249, and 259–279; these read MTLI…FLPI, PGAA…MLYF, AKMG…GLLF, SLYW…LAEW, IGWK…IPGS, AARF…AFEL, NLAV…AFLL, and IFIA…GGGT.

Belongs to the UppP family.

The protein resides in the cell inner membrane. It catalyses the reaction di-trans,octa-cis-undecaprenyl diphosphate + H2O = di-trans,octa-cis-undecaprenyl phosphate + phosphate + H(+). Catalyzes the dephosphorylation of undecaprenyl diphosphate (UPP). Confers resistance to bacitracin. This is Undecaprenyl-diphosphatase from Chlorobium luteolum (strain DSM 273 / BCRC 81028 / 2530) (Pelodictyon luteolum).